Consider the following 148-residue polypeptide: Small ribosomal subunit protein bS6 (148 aa).

Residues 96 to 148 (HEEGQSAMLTRRDDRRERDGDDRPRRREGGFDRGDRGDRGPRRPRDNEAGEGA) form a disordered region.

It belongs to the bacterial ribosomal protein bS6 family.

Binds together with bS18 to 16S ribosomal RNA. This chain is Small ribosomal subunit protein bS6, found in Brucella abortus biovar 1 (strain 9-941).